The chain runs to 216 residues: LexA repressor (216 aa).

Positions 29–49 (RAEIAQALGFRSPNAAEDHLK) form a DNA-binding region, H-T-H motif. Active-site for autocatalytic cleavage activity residues include Ser134 and Lys171.

This sequence belongs to the peptidase S24 family. As to quaternary structure, homodimer.

It carries out the reaction Hydrolysis of Ala-|-Gly bond in repressor LexA.. In terms of biological role, represses a number of genes involved in the response to DNA damage (SOS response), including recA and lexA. In the presence of single-stranded DNA, RecA interacts with LexA causing an autocatalytic cleavage which disrupts the DNA-binding part of LexA, leading to derepression of the SOS regulon and eventually DNA repair. The chain is LexA repressor from Bordetella bronchiseptica (strain ATCC BAA-588 / NCTC 13252 / RB50) (Alcaligenes bronchisepticus).